Reading from the N-terminus, the 423-residue chain is Glycine amidinotransferase, mitochondrial (423 aa).

The transit peptide at 1–43 (MLRVRCLRGGSRGAEAVHYIGSRLGRTLTGWVQRTFQSTQAAT) directs the protein to the mitochondrion. The disordered stretch occupies residues 43–63 (TASSRNSFAADDKATEPLPKD). Ser46 and Ser49 each carry phosphoserine. Basic and acidic residues predominate over residues 52–61 (ADDKATEPLP). Asp170 lines the arginine pocket. Active-site residues include Asp254 and His303. Arginine contacts are provided by Asp305, Arg322, Ser354, and Ser355. The residue at position 385 (Lys385) is an N6-acetyllysine. The active-site Amidino-cysteine intermediate is Cys407.

This sequence belongs to the amidinotransferase family. As to quaternary structure, homodimer.

Its subcellular location is the mitochondrion inner membrane. The catalysed reaction is L-arginine + glycine = guanidinoacetate + L-ornithine. It catalyses the reaction 4-aminobutanoate + L-arginine = 4-guanidinobutanoate + L-ornithine. The enzyme catalyses beta-alanine + L-arginine = 3-guanidinopropanoate + L-ornithine. It carries out the reaction taurine + L-arginine = taurocyamine + L-ornithine. It functions in the pathway amine and polyamine biosynthesis; creatine biosynthesis; creatine from L-arginine and glycine: step 1/2. Its function is as follows. Transamidinase that catalyzes the transfer of the amidino group of L-arginine onto the amino moiety of acceptor metabolites such as glycine, beta-alanine, gamma-aminobutyric acid (GABA) and taurine yielding the corresponding guanidine derivatives. Catalyzes the rate-limiting step of creatine biosynthesis, namely the transfer of the amidino group from L-arginine to glycine to generate guanidinoacetate, which is then methylated by GAMT to form creatine. Provides creatine as a source for ATP generation in tissues with high energy demands, in particular skeletal muscle, heart and brain. The sequence is that of Glycine amidinotransferase, mitochondrial (GATM) from Macaca fascicularis (Crab-eating macaque).